The primary structure comprises 481 residues: Probable myosin light chain kinase DDB_G0284661 (481 aa).

Residues 13–269 (YNITDIIGEG…VKQSLAHKWI (257 aa)) enclose the Protein kinase domain. Residues 19–27 (IGEGTFSTV) and Lys43 each bind ATP. The active-site Proton acceptor is the Asp136. Disordered stretches follow at residues 285–315 (PLITSQQQQQQSPSSLLSSSSSSTASSPSLK) and 345–427 (SNSH…DDDE). Positions 379 to 421 (SNNNINNNNDNNDNNNSNSNNSNNNINNFINNNNNNNNNNSNF) are enriched in low complexity.

Belongs to the protein kinase superfamily. CAMK Ser/Thr protein kinase family. CaMK subfamily.

The enzyme catalyses L-seryl-[myosin light chain] + ATP = O-phospho-L-seryl-[myosin light chain] + ADP + H(+). The catalysed reaction is L-threonyl-[myosin light chain] + ATP = O-phospho-L-threonyl-[myosin light chain] + ADP + H(+). Its activity is regulated as follows. Does not have a calmodulin-binding domain. In terms of biological role, may phosphorylate a specific serine in the N-terminus of a myosin light chain. The protein is Probable myosin light chain kinase DDB_G0284661 of Dictyostelium discoideum (Social amoeba).